A 59-amino-acid chain; its full sequence is Large ribosomal subunit protein uL30 (59 aa).

Belongs to the universal ribosomal protein uL30 family. Part of the 50S ribosomal subunit.

The chain is Large ribosomal subunit protein uL30 from Alteromonas mediterranea (strain DSM 17117 / CIP 110805 / LMG 28347 / Deep ecotype).